Here is a 786-residue protein sequence, read N- to C-terminus: ATP-dependent RNA helicase SUPV3L1, mitochondrial (786 aa).

Residues 1–22 (MSFSRALLWARLPAGRQAGHRA) constitute a mitochondrion transit peptide. Position 99 is an N6-acetyllysine (K99). Residues 194–334 (DARAMQRKII…AIDLVMELMY (141 aa)) form the Helicase ATP-binding domain. 207-214 (GPTNSGKT) lines the ATP pocket. At K220 the chain carries N6-acetyllysine. Positions 353 to 518 (VLDHALESLD…GLHPTAEQIE (166 aa)) constitute a Helicase C-terminal domain. An interaction with LAMTOR5, important for protein stability region spans residues 650–786 (PDASLIRDLQ…RRKKKEPDSD (137 aa)). 2 disordered regions span residues 690–730 (GFPS…DAGE) and 749–786 (KQLEKEWMTQQTEHNKEKTESGTHPKGTRRKKKEPDSD). Polar residues predominate over residues 693–705 (SGSQSRLSGTLKS). Residue S725 is modified to Phosphoserine. Residues 749–771 (KQLEKEWMTQQTEHNKEKTESGT) show a composition bias toward basic and acidic residues.

This sequence belongs to the helicase family. As to quaternary structure, homodimer; in free form. Component of the mitochondrial degradosome (mtEXO) complex which is a heteropentamer containing 2 copies of SUPV3L1 and 3 copies of PNPT1. As part of mitochondrial degradosome complex, interacts with GRSF1 in a RNA-dependent manner; the interaction enhances the activity of the complex. Interacts with LAMTOR5/HBXIP, WRN and BLM. Mg(2+) serves as cofactor. It depends on Mn(2+) as a cofactor. Broadly expressed.

The protein localises to the nucleus. It is found in the mitochondrion matrix. Its subcellular location is the mitochondrion nucleoid. The catalysed reaction is ATP + H2O = ADP + phosphate + H(+). Helicase activity toward DNA substrate is inhibited by micromolar concentrations of 5,6-dichloro-1-(beta-D-ribofuranosyl)benzotriazole (DRBT) and 4,5,6,7-tetrabromobenzotriazole (TBBT). Helicase activity toward RNA substrate is inhibited by elevated concentrations of TBBT. Inhibited by some ring-expanded nucleoside analogs. Its function is as follows. Major helicase player in mitochondrial RNA metabolism. Component of the mitochondrial degradosome (mtEXO) complex, that degrades 3' overhang double-stranded RNA with a 3'-to-5' directionality in an ATP-dependent manner. Involved in the degradation of non-coding mitochondrial transcripts (MT-ncRNA) and tRNA-like molecules. ATPase and ATP-dependent multisubstrate helicase, able to unwind double-stranded (ds) DNA and RNA, and RNA/DNA heteroduplexes in the 5'-to-3' direction. Plays a role in the RNA surveillance system in mitochondria; regulates the stability of mature mRNAs, the removal of aberrantly formed mRNAs and the rapid degradation of non coding processing intermediates. Also implicated in recombination and chromatin maintenance pathways. May protect cells from apoptosis. Associates with mitochondrial DNA. The sequence is that of ATP-dependent RNA helicase SUPV3L1, mitochondrial (SUPV3L1) from Homo sapiens (Human).